The sequence spans 210 residues: MKALKIPEATITRLSIYSRFLKRLDKKGITTVSSGDIAEGVGVSPAQVRKDLAYFGEFGTRGVGYNVKDLIRYTVKILGLSDPWNLVMVGAGNLGSALVTYREFKDRGFSIVGVFDNDLTKIGKRIADMEVLPLEELSRVVKEHNVRIGIIAVPSKAAQDIADIMVKAGLEALLNFAPISLNLPDDVEVRNVDLSVKLEILTFNLALKEK.

The H-T-H motif DNA-binding region spans 16–55 (IYSRFLKRLDKKGITTVSSGDIAEGVGVSPAQVRKDLAYF). NAD(+) is bound at residue 90-95 (GAGNLG).

Belongs to the transcriptional regulatory Rex family. In terms of assembly, homodimer.

The protein resides in the cytoplasm. Functionally, modulates transcription in response to changes in cellular NADH/NAD(+) redox state. The protein is Redox-sensing transcriptional repressor Rex of Desulforamulus reducens (strain ATCC BAA-1160 / DSM 100696 / MI-1) (Desulfotomaculum reducens).